Here is a 490-residue protein sequence, read N- to C-terminus: Aspartyl/glutamyl-tRNA(Asn/Gln) amidotransferase subunit B (490 aa).

It belongs to the GatB/GatE family. GatB subfamily. As to quaternary structure, heterotrimer of A, B and C subunits.

It carries out the reaction L-glutamyl-tRNA(Gln) + L-glutamine + ATP + H2O = L-glutaminyl-tRNA(Gln) + L-glutamate + ADP + phosphate + H(+). The catalysed reaction is L-aspartyl-tRNA(Asn) + L-glutamine + ATP + H2O = L-asparaginyl-tRNA(Asn) + L-glutamate + ADP + phosphate + 2 H(+). Allows the formation of correctly charged Asn-tRNA(Asn) or Gln-tRNA(Gln) through the transamidation of misacylated Asp-tRNA(Asn) or Glu-tRNA(Gln) in organisms which lack either or both of asparaginyl-tRNA or glutaminyl-tRNA synthetases. The reaction takes place in the presence of glutamine and ATP through an activated phospho-Asp-tRNA(Asn) or phospho-Glu-tRNA(Gln). The protein is Aspartyl/glutamyl-tRNA(Asn/Gln) amidotransferase subunit B of Prochlorococcus marinus subsp. pastoris (strain CCMP1986 / NIES-2087 / MED4).